A 524-amino-acid chain; its full sequence is Bifunctional purine biosynthesis protein PurH (524 aa).

One can recognise an MGS-like domain in the interval 1–145 (MIKQALLSVS…KNHRDVTVIV (145 aa)).

This sequence belongs to the PurH family.

It carries out the reaction (6R)-10-formyltetrahydrofolate + 5-amino-1-(5-phospho-beta-D-ribosyl)imidazole-4-carboxamide = 5-formamido-1-(5-phospho-D-ribosyl)imidazole-4-carboxamide + (6S)-5,6,7,8-tetrahydrofolate. The enzyme catalyses IMP + H2O = 5-formamido-1-(5-phospho-D-ribosyl)imidazole-4-carboxamide. Its pathway is purine metabolism; IMP biosynthesis via de novo pathway; 5-formamido-1-(5-phospho-D-ribosyl)imidazole-4-carboxamide from 5-amino-1-(5-phospho-D-ribosyl)imidazole-4-carboxamide (10-formyl THF route): step 1/1. The protein operates within purine metabolism; IMP biosynthesis via de novo pathway; IMP from 5-formamido-1-(5-phospho-D-ribosyl)imidazole-4-carboxamide: step 1/1. This chain is Bifunctional purine biosynthesis protein PurH, found in Cupriavidus metallidurans (strain ATCC 43123 / DSM 2839 / NBRC 102507 / CH34) (Ralstonia metallidurans).